Here is a 122-residue protein sequence, read N- to C-terminus: Large ribosomal subunit protein uL14 (122 aa).

Belongs to the universal ribosomal protein uL14 family. As to quaternary structure, part of the 50S ribosomal subunit. Forms a cluster with proteins L3 and L19. In the 70S ribosome, L14 and L19 interact and together make contacts with the 16S rRNA in bridges B5 and B8.

Binds to 23S rRNA. Forms part of two intersubunit bridges in the 70S ribosome. This chain is Large ribosomal subunit protein uL14, found in Acetivibrio thermocellus (strain ATCC 27405 / DSM 1237 / JCM 9322 / NBRC 103400 / NCIMB 10682 / NRRL B-4536 / VPI 7372) (Clostridium thermocellum).